Consider the following 160-residue polypeptide: 2-C-methyl-D-erythritol 2,4-cyclodiphosphate synthase (160 aa).

A divalent metal cation is bound by residues D9 and H11. Residues 9-11 (DVH) and 35-36 (HS) each bind 4-CDP-2-C-methyl-D-erythritol 2-phosphate. H43 contributes to the a divalent metal cation binding site. 4-CDP-2-C-methyl-D-erythritol 2-phosphate-binding positions include 57-59 (DIG), 62-66 (FPDTD), 101-107 (AEAPKMA), 133-136 (TTSE), F140, and R143.

The protein belongs to the IspF family. In terms of assembly, homotrimer. It depends on a divalent metal cation as a cofactor.

The enzyme catalyses 4-CDP-2-C-methyl-D-erythritol 2-phosphate = 2-C-methyl-D-erythritol 2,4-cyclic diphosphate + CMP. It participates in isoprenoid biosynthesis; isopentenyl diphosphate biosynthesis via DXP pathway; isopentenyl diphosphate from 1-deoxy-D-xylulose 5-phosphate: step 4/6. Involved in the biosynthesis of isopentenyl diphosphate (IPP) and dimethylallyl diphosphate (DMAPP), two major building blocks of isoprenoid compounds. Catalyzes the conversion of 4-diphosphocytidyl-2-C-methyl-D-erythritol 2-phosphate (CDP-ME2P) to 2-C-methyl-D-erythritol 2,4-cyclodiphosphate (ME-CPP) with a corresponding release of cytidine 5-monophosphate (CMP). The polypeptide is 2-C-methyl-D-erythritol 2,4-cyclodiphosphate synthase (Methylobacillus flagellatus (strain ATCC 51484 / DSM 6875 / VKM B-1610 / KT)).